The primary structure comprises 249 residues: MTHQPQQSPQFFLTAPSPCPYLEGQQERKVYTHLVGDKANEINDLLTQGGFRRSQNIAYRPACEVCRACISVRILAGEFEMTRNMRRVWSQNRDLIGRVHKAQPSTEQYALFRDYLDARHRSGGMSDMTVLDYAMMIEDTHVNTQIIEYRRRGPDSFMSAKGDGELIAVALTDVMADGLSMVYSFFSPHMQERSLGTYMILDHIERARAAGLPHVYLGYWVEGSRKMQYKIRFTPQEHLGPRGWQRFEG.

Belongs to the R-transferase family. Bpt subfamily.

The protein resides in the cytoplasm. The enzyme catalyses N-terminal L-glutamyl-[protein] + L-leucyl-tRNA(Leu) = N-terminal L-leucyl-L-glutamyl-[protein] + tRNA(Leu) + H(+). It catalyses the reaction N-terminal L-aspartyl-[protein] + L-leucyl-tRNA(Leu) = N-terminal L-leucyl-L-aspartyl-[protein] + tRNA(Leu) + H(+). Its function is as follows. Functions in the N-end rule pathway of protein degradation where it conjugates Leu from its aminoacyl-tRNA to the N-termini of proteins containing an N-terminal aspartate or glutamate. The polypeptide is Aspartate/glutamate leucyltransferase (Brucella melitensis biotype 2 (strain ATCC 23457)).